Here is a 256-residue protein sequence, read N- to C-terminus: Protein FixA (256 aa).

The protein belongs to the ETF beta-subunit/FixA family. As to quaternary structure, heterodimer of FixA and FixB.

It participates in amine and polyamine metabolism; carnitine metabolism. In terms of biological role, required for anaerobic carnitine reduction. May bring reductant to CaiA. The chain is Protein FixA from Escherichia coli O7:K1 (strain IAI39 / ExPEC).